Consider the following 110-residue polypeptide: Large ribosomal subunit protein uL22 (110 aa).

The protein belongs to the universal ribosomal protein uL22 family. As to quaternary structure, part of the 50S ribosomal subunit.

Functionally, this protein binds specifically to 23S rRNA; its binding is stimulated by other ribosomal proteins, e.g. L4, L17, and L20. It is important during the early stages of 50S assembly. It makes multiple contacts with different domains of the 23S rRNA in the assembled 50S subunit and ribosome. In terms of biological role, the globular domain of the protein is located near the polypeptide exit tunnel on the outside of the subunit, while an extended beta-hairpin is found that lines the wall of the exit tunnel in the center of the 70S ribosome. The protein is Large ribosomal subunit protein uL22 of Solidesulfovibrio magneticus (strain ATCC 700980 / DSM 13731 / RS-1) (Desulfovibrio magneticus).